Reading from the N-terminus, the 497-residue chain is Lysophospholipid acyltransferase 5 (497 aa).

Transmembrane regions (helical) follow at residues 31-51 (LLTI…ISVI), 74-94 (GLDT…VLLL), 100-120 (IFLA…YFYT), 173-193 (LELL…QFPF), 213-235 (AGVR…LRYL), and 264-286 (SLYK…GLTY). Active-site residues include Asn322 and His358. A helical transmembrane segment spans residues 339–361 (FLNNRTISYGAALGFLAVWHGYH). The N-linked (GlcNAc...) asparagine glycan is linked to Asn398. 2 consecutive transmembrane segments (helical) span residues 408 to 428 (FITL…AFVF) and 435 to 455 (IVVY…WAAF). The interval 469 to 497 (KLAGEDQKLQDSNTDKLVEEKKPEDKKSE) is disordered. Positions 470 to 497 (LAGEDQKLQDSNTDKLVEEKKPEDKKSE) are enriched in basic and acidic residues. Residue Ser480 is modified to Phosphoserine.

It belongs to the membrane-bound acyltransferase family. During gastrulation, expressed mainly along the midline in the presumptive mesoderm. During germ band elongation, expressed in mesoderm and endoderm primordia and in the cephalic furrow. Expression in mesoderm and endoderm lineages continues during germ band shortening. At the end of this process, no longer detected in somatic mesoderm or endoderm layer with expression restricted to anterior and posterior domains of the visceral mesoderm.

It localises to the endoplasmic reticulum. The protein resides in the membrane. It carries out the reaction a 1-acyl-sn-glycero-3-phospho-L-serine + an acyl-CoA = a 1,2-diacyl-sn-glycero-3-phospho-L-serine + CoA. The enzyme catalyses 1-(9Z-octadecenoyl)-sn-glycero-3-phospho-L-serine + (9Z)-hexadecenoyl-CoA = 1-(9Z-octadecenoyl)-2-(9Z-hexadecenoyl)-sn-glycero-3-phospho-L-serine + CoA. The catalysed reaction is a 1-acyl-sn-glycero-3-phosphocholine + an acyl-CoA = a 1,2-diacyl-sn-glycero-3-phosphocholine + CoA. It catalyses the reaction 1-hexadecanoyl-sn-glycero-3-phosphocholine + (9Z)-octadecenoyl-CoA = 1-hexadecanoyl-2-(9Z-octadecenoyl)-sn-glycero-3-phosphocholine + CoA. It carries out the reaction (9Z,12Z)-octadecadienoyl-CoA + 1-hexadecanoyl-sn-glycero-3-phosphocholine = 1-hexadecanoyl-2-(9Z,12Z-octadecadienoyl)-sn-glycero-3-phosphocholine + CoA. The enzyme catalyses (5Z,8Z,11Z,14Z)-eicosatetraenoyl-CoA + 1-hexadecanoyl-sn-glycero-3-phosphocholine = 1-hexadecanoyl-2-(5Z,8Z,11Z,14Z-eicosatetraenoyl)-sn-glycero-3-phosphocholine + CoA. The catalysed reaction is (9Z)-hexadecenoyl-CoA + 1-hexadecanoyl-sn-glycero-3-phosphocholine = 1-hexadecanoyl-2-(9Z-hexadecenoyl)-sn-glycero-3-phosphocholine + CoA. The protein operates within lipid metabolism; phospholipid metabolism. In terms of biological role, acyltransferase that mediates the acylation of lysophospholipids to produce phospholipids (glycerophospholipids). Highest activity with lysophosphatidylcholine (1-acyl-sn-glycero-3-phosphocholine or LPC) producing phosphatidylcholine (1,2-diacyl-sn-glycero-3-phosphocholine or PC) (LPCAT activity), but also converts lysophosphatidylserine (1-acyl-2-hydroxy-sn-glycero-3-phospho-L-serine or LPS) to phosphatidylserine (1,2-diacyl-sn-glycero-3-phospho-L-serine or PS) (LPSAT activity). Has a preference for unsaturated fatty acids of at least 16 carbons such as oleoyl-CoA ((9Z)-octadecenoyl-CoA) and palmitoleoyl-CoA ((9Z)-hexadecenoyl-CoA). Glycerophospholipids are important structural and functional components of cellular membrane, acyl-chain remodeling regulates the molecular species distribution of glycerophospholipids which can affect membrane fluidity and curvature. Essential for fertility and viability together with Oysgedart (Oys). Required for germ cells to migrate into the mesoderm. In Drosophila melanogaster (Fruit fly), this protein is Lysophospholipid acyltransferase 5.